The primary structure comprises 217 residues: Somatotropin (217 aa).

Residues 1-26 form the signal peptide; the sequence is MAPGSWFSPLFIAVITLGLQWPKEAA. His-46 provides a ligand contact to Zn(2+). Cys-79 and Cys-190 are disulfide-bonded. Residue Glu-199 coordinates Zn(2+). Cys-207 and Cys-215 are oxidised to a cystine.

The protein belongs to the somatotropin/prolactin family.

It localises to the secreted. Its function is as follows. Growth hormone plays an important role in growth control. This chain is Somatotropin (GH), found in Struthio camelus (Common ostrich).